The chain runs to 778 residues: Exo-beta-D-glucosaminidase (778 aa).

Substrate contacts are provided by residues Tyr-55, 104-105, 180-181, Glu-308, Glu-349, and Tyr-381; these read GE and DE. Glu-181 acts as the Proton donor in catalysis. Glu-349 functions as the Nucleophile in the catalytic mechanism.

The protein belongs to the glycosyl hydrolase 35 family. As to quaternary structure, homodimer.

The protein localises to the cytoplasm. The catalysed reaction is beta-D-glucosaminyl-(1-&gt;4)-N-acetyl-D-glucosamine + H2O = D-glucosamine + N-acetyl-D-glucosamine. The protein operates within glycan degradation; chitin degradation. Functionally, exo-type enzyme that specifically cleaves the non-reducing terminal glycosidic bond of chitooligosaccharides. Catalyzes the hydrolysis of GlcN-GlcNAc to glucosamine (GlcN) and N-acetylglucosamine (GlcNAc). Involved in chitin degradation. Can also hydrolyze chitosan and chitooligosaccharides of various chain lengths. This Pyrococcus horikoshii (strain ATCC 700860 / DSM 12428 / JCM 9974 / NBRC 100139 / OT-3) protein is Exo-beta-D-glucosaminidase.